A 147-amino-acid chain; its full sequence is Ubiquitin-conjugating enzyme E2 D2 (147 aa).

The region spanning 1-147 (MALKRIHKEL…SREWTQKYAM (147 aa)) is the UBC core domain. Cys-85 (glycyl thioester intermediate) is an active-site residue.

Belongs to the ubiquitin-conjugating enzyme family. As to quaternary structure, interacts with SCF (SKP1-CUL1-F-box protein) E3 ubiquitin ligase complex. Interacts with CNOT4 (via RING domain). Interacts with E3 ubiquitin-protein ligases CBLC, PJA1 and PJA2. Interacts with PDZRN3. Interacts with PPP1R11. Interacts with E3 ubiquitin-protein ligase PHF7; the interaction inhibits cleavage of PHF7 and promotes association of the complex with the nucleosome core particle.

It carries out the reaction S-ubiquitinyl-[E1 ubiquitin-activating enzyme]-L-cysteine + [E2 ubiquitin-conjugating enzyme]-L-cysteine = [E1 ubiquitin-activating enzyme]-L-cysteine + S-ubiquitinyl-[E2 ubiquitin-conjugating enzyme]-L-cysteine.. The enzyme catalyses S-ubiquitinyl-[E1 ubiquitin-activating enzyme]-L-cysteine + [acceptor protein]-L-lysine = [E1 ubiquitin-activating enzyme]-L-cysteine + N(6)-monoubiquitinyl-[acceptor protein]-L-lysine.. It participates in protein modification; protein ubiquitination. Its function is as follows. Accepts ubiquitin from the E1 complex and catalyzes its covalent attachment to other proteins. In vitro catalyzes 'Lys-48'-linked polyubiquitination. Mediates the selective degradation of short-lived and abnormal proteins. Functions in the E6/E6-AP-induced ubiquitination of p53/TP53. Mediates ubiquitination of PEX5 and SQSTM1 and autoubiquitination of STUB1 and TRAF6. Involved in the signal-induced conjugation and subsequent degradation of NFKBIA, FBXW2-mediated GCM1 ubiquitination and degradation, MDM2-dependent degradation of p53/TP53 and the activation of MAVS in the mitochondria by RIGI in response to viral infection. Essential for viral activation of IRF3. This Sus scrofa (Pig) protein is Ubiquitin-conjugating enzyme E2 D2 (UBE2D2).